Consider the following 1245-residue polypeptide: ATP-dependent helicase/deoxyribonuclease subunit B (1245 aa).

Positions 737 to 758 (WDDQNNAPTTDLPDRPNPRASE) are disordered. Positions 748–758 (LPDRPNPRASE) are enriched in basic and acidic residues.

The protein belongs to the helicase family. AddB/RexB type 2 subfamily. Heterodimer of AddA and RexB. It depends on Mg(2+) as a cofactor.

Its function is as follows. The heterodimer acts as both an ATP-dependent DNA helicase and an ATP-dependent, dual-direction single-stranded exonuclease. Recognizes the chi site generating a DNA molecule suitable for the initiation of homologous recombination. This subunit has 5' -&gt; 3' nuclease activity but not helicase activity. The chain is ATP-dependent helicase/deoxyribonuclease subunit B from Limosilactobacillus fermentum (strain NBRC 3956 / LMG 18251) (Lactobacillus fermentum).